The sequence spans 421 residues: Proton/sodium-glutamate symport protein (421 aa).

At Met1–Lys3 the chain is on the cytoplasmic side. The chain crosses the membrane as a helical span at residues Ile4 to Phe24. Topologically, residues Tyr25 to Arg43 are extracellular. The helical transmembrane segment at Leu44 to Val64 threads the bilayer. Topologically, residues Gly65–Thr77 are cytoplasmic. The helical transmembrane segment at Ile78 to Ile98 threads the bilayer. The Extracellular portion of the chain corresponds to Phe99–Thr148. The helical transmembrane segment at Gly149–Gly169 threads the bilayer. Topologically, residues Glu170–Pro198 are cytoplasmic. Residues Phe199–Pro219 form a helical membrane-spanning segment. Residues Leu220–Lys222 are Extracellular-facing. Residues Leu223 to Ala243 form a helical membrane-spanning segment. Lys244 is a topological domain (cytoplasmic). The chain crosses the membrane as a helical span at residues Leu245–Tyr265. The Extracellular portion of the chain corresponds to Ser266–Ser306. Residues Thr307 to Val327 form a helical membrane-spanning segment. The Cytoplasmic segment spans residues Ser328–Gln330. The next 2 membrane-spanning stretches (helical) occupy residues Ile331–Ser351 and Phe352–Ile372. The Cytoplasmic segment spans residues Ala373 to Ala421.

It belongs to the dicarboxylate/amino acid:cation symporter (DAACS) (TC 2.A.23) family. Homotrimer.

It is found in the cell membrane. This carrier protein is part of the Na(+)-dependent, binding-protein-independent glutamate-aspartate transport system. The polypeptide is Proton/sodium-glutamate symport protein (gltT) (Bacillus caldotenax).